A 204-amino-acid chain; its full sequence is Urease accessory protein UreG (204 aa).

Position 12 to 19 (12 to 19 (GPVGSGKT)) interacts with GTP.

Belongs to the SIMIBI class G3E GTPase family. UreG subfamily. Homodimer. UreD, UreF and UreG form a complex that acts as a GTP-hydrolysis-dependent molecular chaperone, activating the urease apoprotein by helping to assemble the nickel containing metallocenter of UreC. The UreE protein probably delivers the nickel.

The protein localises to the cytoplasm. Facilitates the functional incorporation of the urease nickel metallocenter. This process requires GTP hydrolysis, probably effectuated by UreG. This chain is Urease accessory protein UreG, found in Pseudomonas fluorescens (strain ATCC BAA-477 / NRRL B-23932 / Pf-5).